The following is a 729-amino-acid chain: Phosphoribosylformylglycinamidine synthase subunit PurL (729 aa).

Residue histidine 54 is part of the active site. ATP is bound by residues tyrosine 57 and lysine 96. A Mg(2+)-binding site is contributed by glutamate 98. Residues 99–102 (SHNH) and arginine 121 each bind substrate. Residue histidine 100 is the Proton acceptor of the active site. Mg(2+) is bound at residue aspartate 122. Glutamine 245 is a binding site for substrate. Residue aspartate 273 participates in Mg(2+) binding. 317–319 (ETQ) serves as a coordination point for substrate. ATP-binding residues include aspartate 495 and glycine 532. Asparagine 533 contributes to the Mg(2+) binding site. Serine 535 is a substrate binding site.

The protein belongs to the FGAMS family. In terms of assembly, monomer. Part of the FGAM synthase complex composed of 1 PurL, 1 PurQ and 2 PurS subunits.

The protein resides in the cytoplasm. It catalyses the reaction N(2)-formyl-N(1)-(5-phospho-beta-D-ribosyl)glycinamide + L-glutamine + ATP + H2O = 2-formamido-N(1)-(5-O-phospho-beta-D-ribosyl)acetamidine + L-glutamate + ADP + phosphate + H(+). Its pathway is purine metabolism; IMP biosynthesis via de novo pathway; 5-amino-1-(5-phospho-D-ribosyl)imidazole from N(2)-formyl-N(1)-(5-phospho-D-ribosyl)glycinamide: step 1/2. Part of the phosphoribosylformylglycinamidine synthase complex involved in the purines biosynthetic pathway. Catalyzes the ATP-dependent conversion of formylglycinamide ribonucleotide (FGAR) and glutamine to yield formylglycinamidine ribonucleotide (FGAM) and glutamate. The FGAM synthase complex is composed of three subunits. PurQ produces an ammonia molecule by converting glutamine to glutamate. PurL transfers the ammonia molecule to FGAR to form FGAM in an ATP-dependent manner. PurS interacts with PurQ and PurL and is thought to assist in the transfer of the ammonia molecule from PurQ to PurL. The protein is Phosphoribosylformylglycinamidine synthase subunit PurL of Staphylococcus aureus (strain bovine RF122 / ET3-1).